The following is a 596-amino-acid chain: MNTAIQAALDHAVQTLQQEGVLPSDWNNSSNLTRTKDRSHGDFASNIAMIGSKAAGMKPRDLAEKILAALPEVADISKAEIAGPGFINFFLNADQRFAILDQIQAQKESFGRSQSNAAKKIQVEFVSANPTSSLHVGHGRGAAYGMTVANLLEATGAKVDREYYVNDAGRQMDILATSTYLRYLELLGQNLVFPKNAYQGDYVKEIAQGIIDKDGDAYVREVANVYKDVPEDVQYAEELDSEGNKVVLSGDKEKHIDGLIANSQQLLGEGYRVFHQAALHAILDDIKDDLADFGVTFNQWFSEASLSAKIDEALETLDQRGFLYEKDGNIWFKSTEFGDEKDRVVKRRNGQTTYFASDIAYHLNKLQRGYTDLVDIWGSDHHGYISRVKAAIDAMGYDSKKLTVLLVQFVSLWRGGEMVQMSSRSGQFVTLRDLRKEVGNDAARFYYVMRKSEQHIDFDLDLAVSQSKDNAVYYIQYAHARICRMLEKAASTGLQFEVSAARSHAARLSLDAETEILAKLAAYPDVVLRAANAYEPHQVGNYLKELAALFHGWYNEHKVLSDDAELTQARLLLSINVQQVLRNGLELLGVSAPEAM.

The 'HIGH' region signature appears at 128–138 (ANPTSSLHVGH).

It belongs to the class-I aminoacyl-tRNA synthetase family. In terms of assembly, monomer.

The protein localises to the cytoplasm. It carries out the reaction tRNA(Arg) + L-arginine + ATP = L-arginyl-tRNA(Arg) + AMP + diphosphate. The sequence is that of Arginine--tRNA ligase from Acinetobacter baumannii (strain AB307-0294).